A 93-amino-acid polypeptide reads, in one-letter code: HssA/B-like protein 26 (93 aa).

This sequence belongs to the hssA/B family.

The sequence is that of HssA/B-like protein 26 (hssl26) from Dictyostelium discoideum (Social amoeba).